The following is a 77-amino-acid chain: Large ribosomal subunit protein uL29 (77 aa).

It belongs to the universal ribosomal protein uL29 family.

This Gluconobacter oxydans (strain 621H) (Gluconobacter suboxydans) protein is Large ribosomal subunit protein uL29.